Reading from the N-terminus, the 272-residue chain is Glutamate 5-kinase (272 aa).

Lys15 provides a ligand contact to ATP. Positions 55, 142, and 158 each coordinate substrate. ATP contacts are provided by residues 178–179 (SD) and 220–226 (TGGMLSK).

This sequence belongs to the glutamate 5-kinase family.

It is found in the cytoplasm. It carries out the reaction L-glutamate + ATP = L-glutamyl 5-phosphate + ADP. It participates in amino-acid biosynthesis; L-proline biosynthesis; L-glutamate 5-semialdehyde from L-glutamate: step 1/2. Functionally, catalyzes the transfer of a phosphate group to glutamate to form L-glutamate 5-phosphate. This chain is Glutamate 5-kinase, found in Streptococcus equi subsp. zooepidemicus (strain H70).